Reading from the N-terminus, the 390-residue chain is Pyruvate dehydrogenase E1 component subunit alpha-1, mitochondrial (390 aa).

Residues 1–15 (MAAAILLRRVPPARA) constitute a mitochondrion transit peptide. Pyruvate is bound by residues histidine 91, tyrosine 117, arginine 118, glycine 166, valine 168, aspartate 197, glycine 198, alanine 199, asparagine 226, and tyrosine 228. Thiamine diphosphate contacts are provided by tyrosine 117, arginine 118, glycine 166, valine 168, aspartate 197, glycine 198, alanine 199, and asparagine 226. Residue aspartate 197 participates in Mg(2+) binding. Mg(2+) is bound by residues asparagine 226 and tyrosine 228. Histidine 292 contacts thiamine diphosphate. Positions 293 to 312 (SMSDPGSTYRTRDEISGVRQ) are disordered. The segment covering 302-312 (RTRDEISGVRQ) has biased composition (basic and acidic residues).

In terms of assembly, tetramer of 2 alpha and 2 beta subunits. Requires thiamine diphosphate as cofactor. Mg(2+) is required as a cofactor.

It localises to the mitochondrion matrix. The catalysed reaction is N(6)-[(R)-lipoyl]-L-lysyl-[protein] + pyruvate + H(+) = N(6)-[(R)-S(8)-acetyldihydrolipoyl]-L-lysyl-[protein] + CO2. The pyruvate dehydrogenase complex catalyzes the overall conversion of pyruvate to acetyl-CoA and CO(2). It contains multiple copies of three enzymatic components: pyruvate dehydrogenase (E1), dihydrolipoamide acetyltransferase (E2) and lipoamide dehydrogenase (E3). This Oryza sativa subsp. japonica (Rice) protein is Pyruvate dehydrogenase E1 component subunit alpha-1, mitochondrial.